The sequence spans 550 residues: Methionine--tRNA ligase (550 aa).

The short motif at 13-23 is the 'HIGH' region element; it reads PYANGPLHFGH. Zn(2+) is bound by residues C145, C148, C158, and C161. Positions 331 to 335 match the 'KMSKS' region motif; it reads QFSKS. An ATP-binding site is contributed by K334.

It belongs to the class-I aminoacyl-tRNA synthetase family. MetG type 1 subfamily. As to quaternary structure, monomer. Zn(2+) serves as cofactor.

It is found in the cytoplasm. The catalysed reaction is tRNA(Met) + L-methionine + ATP = L-methionyl-tRNA(Met) + AMP + diphosphate. Functionally, is required not only for elongation of protein synthesis but also for the initiation of all mRNA translation through initiator tRNA(fMet) aminoacylation. The protein is Methionine--tRNA ligase of Chlamydia trachomatis serovar A (strain ATCC VR-571B / DSM 19440 / HAR-13).